Consider the following 354-residue polypeptide: Uroporphyrinogen decarboxylase (354 aa).

Substrate contacts are provided by residues 27 to 31, Asp-77, Tyr-154, Thr-209, and His-327; that span reads RQAGR.

It belongs to the uroporphyrinogen decarboxylase family. In terms of assembly, homodimer.

Its subcellular location is the cytoplasm. It carries out the reaction uroporphyrinogen III + 4 H(+) = coproporphyrinogen III + 4 CO2. Its pathway is porphyrin-containing compound metabolism; protoporphyrin-IX biosynthesis; coproporphyrinogen-III from 5-aminolevulinate: step 4/4. Its function is as follows. Catalyzes the decarboxylation of four acetate groups of uroporphyrinogen-III to yield coproporphyrinogen-III. This is Uroporphyrinogen decarboxylase from Cronobacter sakazakii (strain ATCC BAA-894) (Enterobacter sakazakii).